A 367-amino-acid chain; its full sequence is MQANKNIQKLTPYLSIPHKIWNSSQSNILKLDWNEATIPPSPYVIESIKKFLVNGNLNWYPNTKNLYLLDKIAEYTKQINSSFVELFEGSDSAHECIIDVFLDKCDKIGIVSPTYDNFRSRANGVGIETISFTLDDNFNLDFDSLEYFIHEKRIKLLYLCNPNNPTGKSYNIQKIKSLIINNPNVMFIIDEAYYEFTSQSVCDLVEQCNNLIITRTFSKAFALASFRIGYIISHPENIESINKLRNPKSVPMLSQIAANAALEDLQYMRDYVDEVSCARMEFVKFLNTLTTGGGGIFNDSVANFVLIQNENISLFVGFLEKEGIFIRNYSHLISKNCRISIGTRNQMSYVAEKIQEFAKKQGGFHLV.

Position 219 is an N6-(pyridoxal phosphate)lysine (lysine 219).

This sequence belongs to the class-II pyridoxal-phosphate-dependent aminotransferase family. Pyridoxal 5'-phosphate serves as cofactor.

The enzyme catalyses dihydroxyacetone phosphate + L-glutamate = (S)-serinol phosphate + 2-oxoglutarate. Its pathway is capsule biogenesis; capsule polysaccharide biosynthesis. Pyridoxal phosphate (PLP)-dependent transaminase involved in the biosynthesis of amidated D-glucuronic acid structures found on the capsular polysaccharide (CPS) of C.jejuni. Catalyzes the transamination of dihydroxyacetone phosphate (DHAP) to (S)-serinol phosphate in the presence of L-glutamate. Less active with L-aspartate. No activity with dihydroxyacetone or L-alanine. This Campylobacter jejuni subsp. jejuni serotype O:2 (strain ATCC 700819 / NCTC 11168) protein is Dihydroxyacetone phosphate transaminase Cj1437c.